A 1053-amino-acid chain; its full sequence is MSRRKQAKPQHINSEEDQGEQQPQQQTPEFADAAPAAPAAGELGAPVNHPGNDEVASEDEATVKRLRREETHVCEKCCAEFFSISEFLEHKKNCTKNPPVLIMNDSEGPVPSEDFSGAVLSHQPTSPGSKDCHRENGGSSEDMKEKPDAESVVYLKTETALPPTPQDISYLAKGKVANTNVTLQALRGTKVAVNQRSADALPAPVPGANSIPWVLEQILCLQQQQLQQIQLTEQIRIQVNMWASHALHSSGAGADTLKTLGSHMSQQVSAAVALLSQKAGSQGLSLDALKQAKLPHANIPSATSSLSPGLAPFTLKPDGTRVLPNVMSRLPSALLPQAPGSVLFQSPFSTVALDTSKKGKGKPPNISAVDVKPKDEAALYKHKCKYCSKVFGTDSSLQIHLRSHTGERPFVCSVCGHRFTTKGNLKVHFHRHPQVKANPQLFAEFQDKVAAGNGIPYALSVPDPIDEPSLSLDSKPVLVTTSVGLPQNLSSGTNPKDLTGGSLPGDLQPGPSPESEGGPTLPGVGPNYNSPRAGGFQGSGTPEPGSETLKLQQLVENIDKATTDPNECLICHRVLSCQSSLKMHYRTHTGERPFQCKICGRAFSTKGNLKTHLGVHRTNTSIKTQHSCPICQKKFTNAVMLQQHIRMHMGGQIPNTPLPENPCDFTGSEPMTVGENGSTGAICHDDVIESIDVEEVSSQEAPSSSSKVPTPLPSIHSASPTLGFAMMASLDAPGKVGPAPFNLQRQGSRENGSVESDGLTNDSSSLMGDQEYQSRSPDILETTSFQALSPANSQAESIKSKSPDAGSKAESSENSRTEMEGRSSLPSTFIRAPPTYVKVEVPGTFVGPSTLSPGMTPLLAAQPRRQAKQHGCTRCGKNFSSASALQIHERTHTGEKPFVCNICGRAFTTKGNLKVHYMTHGANNNSARRGRKLAIENTMALLGTDGKRVSEIFPKEILAPSVNVDPVVWNQYTSMLNGGLAVKTNEISVIQSGGVPTLPVSLGATSVVNNATVSKMDGSQSGISADVEKPSATDGVPKHQFPHFLEENKIAVS.

The interval 1 to 62 (MSRRKQAKPQ…DEVASEDEAT (62 aa)) is disordered. Positions 20 to 46 (EQQPQQQTPEFADAAPAAPAAGELGAP) are enriched in low complexity. Position 57 is a phosphoserine (Ser57). Residues 72–94 (HVCEKCCAEFFSISEFLEHKKNC) form a C2H2-type 1; atypical zinc finger. Positions 116 to 149 (SGAVLSHQPTSPGSKDCHRENGGSSEDMKEKPDA) are disordered. The segment covering 130–149 (KDCHRENGGSSEDMKEKPDA) has biased composition (basic and acidic residues). A Glycyl lysine isopeptide (Lys-Gly) (interchain with G-Cter in SUMO1); alternate cross-link involves residue Lys156. Lys156 participates in a covalent cross-link: Glycyl lysine isopeptide (Lys-Gly) (interchain with G-Cter in SUMO2); alternate. Glycyl lysine isopeptide (Lys-Gly) (interchain with G-Cter in SUMO2) cross-links involve residues Lys175, Lys190, and Lys290. Position 307 is a phosphoserine (Ser307). Residue Lys316 forms a Glycyl lysine isopeptide (Lys-Gly) (interchain with G-Cter in SUMO1); alternate linkage. Lys316 participates in a covalent cross-link: Glycyl lysine isopeptide (Lys-Gly) (interchain with G-Cter in SUMO2); alternate. Lys372 is covalently cross-linked (Glycyl lysine isopeptide (Lys-Gly) (interchain with G-Cter in SUMO2)). A Glycyl lysine isopeptide (Lys-Gly) (interchain with G-Cter in SUMO1); alternate cross-link involves residue Lys374. Lys374 is covalently cross-linked (Glycyl lysine isopeptide (Lys-Gly) (interchain with G-Cter in SUMO2); alternate). 2 C2H2-type zinc fingers span residues 382–404 (HKCKYCSKVFGTDSSLQIHLRSH) and 410–432 (FVCSVCGHRFTTKGNLKVHFHRH). A Glycyl lysine isopeptide (Lys-Gly) (interchain with G-Cter in SUMO2) cross-link involves residue Lys436. Residues 483-496 (VGLPQNLSSGTNPK) show a composition bias toward polar residues. The interval 483–546 (VGLPQNLSSG…QGSGTPEPGS (64 aa)) is disordered. Thr541 carries the post-translational modification Phosphothreonine. Lys550 is covalently cross-linked (Glycyl lysine isopeptide (Lys-Gly) (interchain with G-Cter in SUMO2)). 2 consecutive C2H2-type zinc fingers follow at residues 566 to 588 (NECLICHRVLSCQSSLKMHYRTH) and 594 to 616 (FQCKICGRAFSTKGNLKTHLGVH). Glycyl lysine isopeptide (Lys-Gly) (interchain with G-Cter in SUMO2) cross-links involve residues Lys597 and Lys623. Residues 626 to 648 (HSCPICQKKFTNAVMLQQHIRMH) form a C2H2-type 6 zinc finger. 3 disordered regions span residues 694 to 714 (EEVSSQEAPSSSSKVPTPLPS), 736 to 776 (VGPA…QSRS), and 788 to 828 (LSPA…LPST). Residues 698 to 708 (SQEAPSSSSKV) show a composition bias toward low complexity. Polar residues-rich tracts occupy residues 743–776 (LQRQGSRENGSVESDGLTNDSSSLMGDQEYQSRS) and 788–797 (LSPANSQAES). A phosphoserine mark is found at Ser776 and Ser789. Residues 810 to 821 (ESSENSRTEMEG) show a composition bias toward basic and acidic residues. Residue Lys838 forms a Glycyl lysine isopeptide (Lys-Gly) (interchain with G-Cter in SUMO1); alternate linkage. A Glycyl lysine isopeptide (Lys-Gly) (interchain with G-Cter in SUMO2); alternate cross-link involves residue Lys838. Ser852 carries the phosphoserine modification. The segment at 870-892 (HGCTRCGKNFSSASALQIHERTH) adopts a C2H2-type 7 zinc-finger fold. Lys896 is covalently cross-linked (Glycyl lysine isopeptide (Lys-Gly) (interchain with G-Cter in SUMO2)). The segment at 898 to 920 (FVCNICGRAFTTKGNLKVHYMTH) adopts a C2H2-type 8 zinc-finger fold. Residues Lys932 and Lys947 each participate in a glycyl lysine isopeptide (Lys-Gly) (interchain with G-Cter in SUMO2) cross-link. Residues 1018 to 1039 (GSQSGISADVEKPSATDGVPKH) are disordered. Phosphoserine is present on Ser1019.

Belongs to the sal C2H2-type zinc-finger protein family. In terms of assembly, interacts with POU5F1/OCT4. Interacts with NANOG. Interacts with BEND3. Interacts with NSD2 (via PHD-type zinc fingers 1, 2 and 3). Interacts with NRBP1. In terms of processing, isoform SALL4B exists primarily as a ubiquitinated form. Sumoylation with both SUMO1 and SUMO2 regulates the stability, subcellular localization, transcriptional activity, and may reduce interaction with POU5F1/OCT4. As to expression, expressed in testis. Constitutively expressed in acute myeloid leukemia (AML).

The protein resides in the cytoplasm. It localises to the nucleus. Functionally, transcription factor with a key role in the maintenance and self-renewal of embryonic and hematopoietic stem cells. The protein is Sal-like protein 4 (SALL4) of Homo sapiens (Human).